A 421-amino-acid chain; its full sequence is Acylglycerol kinase, mitochondrial (421 aa).

Lys6 carries the post-translational modification N6-acetyllysine. The interval 15 to 31 (TTAGLCLLTWGGHWLYG) is hydrophobic. Residues 58–199 (AQVKKATVFL…LDVLQIKGEK (142 aa)) enclose the DAGKc domain. The interval 252-271 (ISYTGPRERPPIEPEETPPR) is disordered.

The protein belongs to the AGK family. In terms of assembly, component of the TIM22 complex, which core is composed of TIMM22, associated with TIMM10 (TIMM10A and/or TIMM10B), TIMM9, AGK and TIMM29. Interacts with SMIM26. Requires Mg(2+) as cofactor. As to expression, ubiquitously expressed.

It localises to the mitochondrion inner membrane. The protein resides in the mitochondrion intermembrane space. The catalysed reaction is a monoacylglycerol + ATP = a monoacyl-sn-glycero-3-phosphate + ADP + H(+). It catalyses the reaction a 1,2-diacyl-sn-glycerol + ATP = a 1,2-diacyl-sn-glycero-3-phosphate + ADP + H(+). It carries out the reaction an N-acylsphing-4-enine + ATP = an N-acylsphing-4-enine 1-phosphate + ADP + H(+). The enzyme catalyses 1,2-di-(9Z-octadecenoyl)-sn-glycerol + ATP = 1,2-di-(9Z-octadecenoyl)-sn-glycero-3-phosphate + ADP + H(+). The catalysed reaction is 1-(9Z-octadecenoyl)-sn-glycerol + ATP = 1-(9Z-octadecenoyl)-sn-glycero-3-phosphate + ADP + H(+). It catalyses the reaction 1-(5Z,8Z,11Z,14Z-eicosatetraenoyl)-sn-glycerol + ATP = 1-(5Z,8Z,11Z,14Z-eicosatetraenoyl)-sn-glycero-3-phosphate + ADP + H(+). It carries out the reaction a 1-acyl-sn-glycerol + ATP = a 1-acyl-sn-glycero-3-phosphate + ADP + H(+). The enzyme catalyses 1-hexadecanoyl-sn-glycerol + ATP = 1-hexadecanoyl-sn-glycero-3-phosphate + ADP + H(+). The catalysed reaction is a 2-acylglycerol + ATP = a 2-acyl-sn-glycerol 3-phosphate + ADP + H(+). It catalyses the reaction 2-(5Z,8Z,11Z,14Z-eicosatetraenoyl)-glycerol + ATP = 2-(5Z,8Z,11Z,14Z-eicosatetraenoyl)-sn-glycero-3-phosphate + ADP + H(+). It carries out the reaction N-(hexanoyl)sphing-4-enine + ATP = N-hexanoylsphing-4-enine 1-phosphate + ADP + H(+). It participates in lipid metabolism; glycerolipid metabolism. Its activity is regulated as follows. Both the ceramide and diacylglycerol kinase activities are inhibited by sphingosine and stimulated by cardiolipin. Both activities are stimulated by calcium when magnesium concentrations are low but inhibited by calcium when magnesium concentrations are high. In terms of biological role, lipid kinase that can phosphorylate both monoacylglycerol and diacylglycerol to form lysophosphatidic acid (LPA) and phosphatidic acid (PA), respectively. Phosphorylates ceramide but not sphingosine. Phosphorylates 1,2-dioleoylglycerol more rapidly than 2,3-dioleoylglycerol. Independently of its lipid kinase activity, acts as a component of the TIM22 complex. The TIM22 complex mediates the import and insertion of multi-pass transmembrane proteins into the mitochondrial inner membrane by forming a twin-pore translocase that uses the membrane potential as the external driving force. In the TIM22 complex, required for the import of a subset of metabolite carriers into mitochondria, such as ANT1/SLC25A4 and SLC25A24, while it is not required for the import of TIMM23. Overexpression increases the formation and secretion of LPA, resulting in transactivation of EGFR and activation of the downstream MAPK signaling pathway, leading to increased cell growth. This is Acylglycerol kinase, mitochondrial from Mus musculus (Mouse).